The sequence spans 638 residues: LIM domain kinase 2 (638 aa).

2 LIM zinc-binding domains span residues 12-63 (CQGC…CHKD) and 72-124 (CHGC…CGKC). One can recognise a PDZ domain in the interval 152-239 (HISMPATTEG…TLQLLIEHDP (88 aa)). The tract at residues 280 to 304 (RRRSLRRSNSISKSPGPSSPKEPLL) is disordered. Positions 286 to 304 (RSNSISKSPGPSSPKEPLL) are enriched in low complexity. Phosphoserine is present on residues Ser293 and Ser298. Residues 331–608 (LIHGEVLGKG…DFFEALSLYL (278 aa)) enclose the Protein kinase domain. Residues 337–345 (LGKGFFGQA) and Asn360 contribute to the ATP site. Asp451 is a catalytic residue. Thr505 carries the post-translational modification Phosphothreonine; by ROCK1 and CDC42BP.

It belongs to the protein kinase superfamily. TKL Ser/Thr protein kinase family. Binds ROCK1 and MARF1. Interacts with NISCH. Phosphorylated on serine and/or threonine residues by ROCK1.

The protein resides in the cytoplasm. It localises to the cytoskeleton. The protein localises to the spindle. It is found in the microtubule organizing center. Its subcellular location is the centrosome. It carries out the reaction L-seryl-[protein] + ATP = O-phospho-L-seryl-[protein] + ADP + H(+). It catalyses the reaction L-threonyl-[protein] + ATP = O-phospho-L-threonyl-[protein] + ADP + H(+). Serine/threonine-protein kinase that plays an essential role in the regulation of actin filament dynamics. Acts downstream of several Rho family GTPase signal transduction pathways. Involved in astral microtubule organization and mitotic spindle orientation during early stages of mitosis by mediating phosphorylation of TPPP. Displays serine/threonine-specific phosphorylation of myelin basic protein and histone (MBP) in vitro. Suppresses ciliogenesis via multiple pathways; phosphorylation of CFL1, suppression of directional trafficking of ciliary vesicles to the ciliary base, and by facilitating YAP1 nuclear localization where it acts as a transcriptional corepressor of the TEAD4 target genes AURKA and PLK1. The polypeptide is LIM domain kinase 2 (LIMK2) (Bos taurus (Bovine)).